The chain runs to 1687 residues: A-kinase anchor protein SPHKAP (1687 aa).

Residues 1-14 (MDVNSRLSVQSNVE) show a composition bias toward polar residues. Disordered stretches follow at residues 1 to 25 (MDVNSRLSVQSNVESPLMHEGPEPQ) and 272 to 293 (RKHRTPSTKTEGSKENTEENTS). Positions 914–931 (FAEELAETVVSMATEIAA) are PKA-RII subunit binding domain. The interval 964–989 (LKRKKENSSAGSTVRKHKPPRLSEIK) is disordered. Phosphoserine is present on residues Ser1010, Ser1070, Ser1092, Ser1105, Ser1106, Ser1109, Ser1244, and Ser1273. Disordered regions lie at residues 1363 to 1406 (VTEG…SPRR) and 1421 to 1520 (DQKE…PDDT). Positions 1366–1375 (GNHSPVSSPG) are enriched in polar residues. Over residues 1382-1393 (KPSDFDPRRETS) the composition is skewed to basic and acidic residues. Polar residues predominate over residues 1461–1470 (TAPSTCQSSR). Residues 1482 to 1494 (EVLKEDIPRDESR) show a composition bias toward basic and acidic residues. The segment covering 1495–1508 (NPPSSSEESTGSWS) has biased composition (low complexity).

The protein belongs to the AKAP110 family. Interacts (via the PKA-RII subunit binding domain) with the RI subunit of PKA. Interacts with SPHK1; the interaction greatly reduces SPHK1 activity.

It localises to the cytoplasm. Its function is as follows. Anchoring protein that binds preferentially to the type I regulatory subunit of c-AMP-dependent protein kinase (PKA type I) and targets it to distinct subcellular compartments. May act as a converging factor linking cAMP and sphingosine signaling pathways. Plays a regulatory role in the modulation of SPHK1. The chain is A-kinase anchor protein SPHKAP (Sphkap) from Mus musculus (Mouse).